The chain runs to 1203 residues: DNA-directed RNA polymerase subunit beta (1203 aa).

The span at 1174-1195 shows a compositional bias: basic and acidic residues; the sequence is AAQEAKAAFEAEEAEKATKAEA. The interval 1174–1203 is disordered; the sequence is AAQEAKAAFEAEEAEKATKAEATEEAAEQE.

This sequence belongs to the RNA polymerase beta chain family. The RNAP catalytic core consists of 2 alpha, 1 beta, 1 beta' and 1 omega subunit. When a sigma factor is associated with the core the holoenzyme is formed, which can initiate transcription.

It catalyses the reaction RNA(n) + a ribonucleoside 5'-triphosphate = RNA(n+1) + diphosphate. DNA-dependent RNA polymerase catalyzes the transcription of DNA into RNA using the four ribonucleoside triphosphates as substrates. The polypeptide is DNA-directed RNA polymerase subunit beta (Streptococcus pneumoniae (strain JJA)).